The primary structure comprises 512 residues: Maturase K (512 aa).

It belongs to the intron maturase 2 family. MatK subfamily.

The protein resides in the plastid. It localises to the chloroplast. Usually encoded in the trnK tRNA gene intron. Probably assists in splicing its own and other chloroplast group II introns. The chain is Maturase K from Lilium longiflorum (Trumpet lily).